The primary structure comprises 632 residues: Basic helix-loop-helix ARNT-like protein 1 (632 aa).

Positions 1–39 (MADQRMDISSTISDFMSPGPTDLLSGSLGTSGVDCNRKR) are disordered. Phosphoserine; by GSK3-beta is present on S17. T21 bears the Phosphothreonine; by GSK3-beta mark. Positions 36-41 (NRKRKG) match the Nuclear localization signal motif. One can recognise a bHLH domain in the interval 79–132 (NAREAHSQIEKRRRDKMNSFIDELASLVPTCNAMSRKLDKLTVLRMAVQHMKTL). A Phosphoserine modification is found at S85. The residue at position 97 (S97) is a Phosphoserine; by CK2. The Nuclear export signal 1 motif lies at 149 to 159 (LSDDELKHLIL). Residues 150–222 (SDDELKHLIL…EQLSSSDTAP (73 aa)) enclose the PAS 1 domain. A Glycyl lysine isopeptide (Lys-Gly) (interchain with G-Cter in SUMO2 and SUMO3) cross-link involves residue K259. A Glycyl lysine isopeptide (Lys-Gly) (interchain with G-Cter in SUMO); alternate cross-link involves residue K266. A Glycyl lysine isopeptide (Lys-Gly) (interchain with G-Cter in SUMO2); alternate cross-link involves residue K266. One can recognise a PAS 2 domain in the interval 333 to 403 (QPANGEIRVK…CHRQVLQTRE (71 aa)). A Nuclear export signal 2 motif is present at residues 367 to 375 (LAYLPQELL). The 44-residue stretch at 408–451 (NCYKFKIKDGSFITLRSRWFSFMNPWTKEVEYIVSTNTVVLANV) folds into the PAC domain. Disordered stretches follow at residues 465–498 (PPHS…RAGA) and 517–601 (GSSP…SPSN). The tract at residues 514-594 (RIRGSSPSSC…IGIDMIDNDQ (81 aa)) is interaction with CIART. Residues 517–527 (GSSPSSCGSSP) are compositionally biased toward low complexity. N6-acetyllysine is present on K544.

In terms of assembly, component of the circadian clock oscillator which includes the CRY1/2 proteins, CLOCK or NPAS2, BMAL1 or BMAL2, CSNK1D and/or CSNK1E, TIMELESS and the PER1/2/3 proteins. Forms a heterodimer with CLOCK. The CLOCK-BMAL1 heterodimer is required for E-box-dependent transactivation, for CLOCK nuclear translocation and degradation, and, for phosphorylation of both CLOCK and BMAL1. Part of a nuclear complex which also includes RACK1 and PRKCA; RACK1 and PRKCA are recruited to the complex in a circadian manner. Interacts with NPAS2. Interacts with EZH2. Interacts with SUMO3. Interacts with SIRT1. Interacts with AHR. Interacts with ID1, ID2 and ID3. Interacts with DDX4. Interacts with OGT. Interacts with EED and SUZ12. Interacts with MTA1. Interacts with CIART. Interacts with HSP90. Interacts with KAT2B and EP300. Interacts with BHLHE40/DEC1 and BHLHE41/DEC2. Interacts with RELB and the interaction is enhanced in the presence of CLOCK. Interacts with PER1, PER2, CRY1 and CRY2 and this interaction requires a translocation to the nucleus. Interaction of the CLOCK-BMAL1 heterodimer with PER or CRY inhibits transcription activation. Interaction of the CLOCK-BMAL1 with CRY1 is independent of DNA but with PER2 is off DNA. The CLOCK-BMAL1 heterodimer interacts with GSK3B. Interacts with KDM5A. Interacts with KMT2A; in a circadian manner. Interacts with UBE3A. Interacts with PRKCG. Interacts with MAGEL2. Interacts with NCOA2. Interacts with THRAP3. The CLOCK-BMAL1 heterodimer interacts with PASD1. Interacts with PASD1. Interacts with USP9X. Interacts with PIWIL2 (via PIWI domain). Interacts with HDAC3. Interacts with HNF4A. Ubiquitinated, leading to its proteasomal degradation. Deubiquitinated by USP9X. Post-translationally, O-glycosylated; contains O-GlcNAc. O-glycosylation by OGT prevents protein degradation by inhibiting ubiquitination. It also stabilizes the CLOCK-BMAL1 heterodimer thereby increasing CLOCK-BMAL1-mediated transcription of genes in the negative loop of the circadian clock such as PER1/2/3 and CRY1/2. In terms of processing, acetylated on Lys-544 by CLOCK during the repression phase of the circadian cycle. Acetylation facilitates recruitment of CRY1 protein and initiates the repression phase of the circadian cycle. Acetylated at Lys-544 by KAT5 during the activation phase of the cycle, leading to recruitment of the positive transcription elongation factor b (P-TEFb) and BRD4, followed by productive elongation of circadian transcripts. Deacetylated by SIRT1, which may result in decreased protein stability. Phosphorylated upon dimerization with CLOCK. Phosphorylation enhances the transcriptional activity, alters the subcellular localization and decreases the stability of the CLOCK-BMAL1 heterodimer by promoting its degradation. Phosphorylation shows circadian variations in the liver with a peak between CT10 to CT14. Phosphorylation at Ser-97 by CK2 is essential for its nuclear localization, its interaction with CLOCK and controls CLOCK nuclear entry. Dephosphorylation at Ser-85 is important for dimerization with CLOCK and transcriptional activity. Post-translationally, sumoylated on Lys-266 upon dimerization with CLOCK. Predominantly conjugated to poly-SUMO2/3 rather than SUMO1 and the level of these conjugates undergo rhythmic variation, peaking at CT9-CT12. Sumoylation localizes it exclusively to the PML body and promotes its ubiquitination in the PML body, ubiquitin-dependent proteasomal degradation and the transcriptional activity of the CLOCK-BMAL1 heterodimer. In terms of processing, undergoes lysosome-mediated degradation in a time-dependent manner in the liver. In terms of tissue distribution, expressed in liver and testis (at protein level). Expressed in the suprachiasmatic nucleus (SCN) in a circadian manner.

It is found in the nucleus. The protein localises to the cytoplasm. It localises to the PML body. The redox state of the cell can modulate the transcriptional activity of the CLOCK-BMAL1 and NPAS2-BMAL1 heterodimers; NADH and NADPH enhance the DNA-binding activity of the heterodimers. Transcriptional activator which forms a core component of the circadian clock. The circadian clock, an internal time-keeping system, regulates various physiological processes through the generation of approximately 24 hour circadian rhythms in gene expression, which are translated into rhythms in metabolism and behavior. It is derived from the Latin roots 'circa' (about) and 'diem' (day) and acts as an important regulator of a wide array of physiological functions including metabolism, sleep, body temperature, blood pressure, endocrine, immune, cardiovascular, and renal function. Consists of two major components: the central clock, residing in the suprachiasmatic nucleus (SCN) of the brain, and the peripheral clocks that are present in nearly every tissue and organ system. Both the central and peripheral clocks can be reset by environmental cues, also known as Zeitgebers (German for 'timegivers'). The predominant Zeitgeber for the central clock is light, which is sensed by retina and signals directly to the SCN. The central clock entrains the peripheral clocks through neuronal and hormonal signals, body temperature and feeding-related cues, aligning all clocks with the external light/dark cycle. Circadian rhythms allow an organism to achieve temporal homeostasis with its environment at the molecular level by regulating gene expression to create a peak of protein expression once every 24 hours to control when a particular physiological process is most active with respect to the solar day. Transcription and translation of core clock components (CLOCK, NPAS2, BMAL1, BMAL2, PER1, PER2, PER3, CRY1 and CRY2) plays a critical role in rhythm generation, whereas delays imposed by post-translational modifications (PTMs) are important for determining the period (tau) of the rhythms (tau refers to the period of a rhythm and is the length, in time, of one complete cycle). A diurnal rhythm is synchronized with the day/night cycle, while the ultradian and infradian rhythms have a period shorter and longer than 24 hours, respectively. Disruptions in the circadian rhythms contribute to the pathology of cardiovascular diseases, cancer, metabolic syndromes and aging. A transcription/translation feedback loop (TTFL) forms the core of the molecular circadian clock mechanism. Transcription factors, CLOCK or NPAS2 and BMAL1 or BMAL2, form the positive limb of the feedback loop, act in the form of a heterodimer and activate the transcription of core clock genes and clock-controlled genes (involved in key metabolic processes), harboring E-box elements (5'-CACGTG-3') within their promoters. The core clock genes: PER1/2/3 and CRY1/2 which are transcriptional repressors form the negative limb of the feedback loop and interact with the CLOCK|NPAS2-BMAL1|BMAL2 heterodimer inhibiting its activity and thereby negatively regulating their own expression. This heterodimer also activates nuclear receptors NR1D1/2 and RORA/B/G, which form a second feedback loop and which activate and repress BMAL1 transcription, respectively. BMAL1 positively regulates myogenesis and negatively regulates adipogenesis via the transcriptional control of the genes of the canonical Wnt signaling pathway. Plays a role in normal pancreatic beta-cell function; regulates glucose-stimulated insulin secretion via the regulation of antioxidant genes NFE2L2/NRF2 and its targets SESN2, PRDX3, CCLC and CCLM. Negatively regulates the mTORC1 signaling pathway; regulates the expression of MTOR and DEPTOR. Controls diurnal oscillations of Ly6C inflammatory monocytes; rhythmic recruitment of the PRC2 complex imparts diurnal variation to chemokine expression that is necessary to sustain Ly6C monocyte rhythms. Regulates the expression of HSD3B2, STAR, PTGS2, CYP11A1, CYP19A1 and LHCGR in the ovary and also the genes involved in hair growth. Plays an important role in adult hippocampal neurogenesis by regulating the timely entry of neural stem/progenitor cells (NSPCs) into the cell cycle and the number of cell divisions that take place prior to cell-cycle exit. Regulates the circadian expression of CIART and KLF11. The CLOCK-BMAL1 heterodimer regulates the circadian expression of SERPINE1/PAI1, VWF, B3, CCRN4L/NOC, NAMPT, DBP, MYOD1, PPARGC1A, PPARGC1B, SIRT1, GYS2, F7, NGFR, GNRHR, BHLHE40/DEC1, ATF4, MTA1, KLF10 and also genes implicated in glucose and lipid metabolism. Promotes rhythmic chromatin opening, regulating the DNA accessibility of other transcription factors. May play a role in spermatogenesis; contributes to the chromatoid body assembly and physiology. The NPAS2-BMAL1 heterodimer positively regulates the expression of MAOA, F7 and LDHA and modulates the circadian rhythm of daytime contrast sensitivity by regulating the rhythmic expression of adenylate cyclase type 1 (ADCY1) in the retina. The preferred binding motif for the CLOCK-BMAL1 heterodimer is 5'-CACGTGA-3', which contains a flanking adenine nucleotide at the 3-prime end of the canonical 6-nucleotide E-box sequence. CLOCK specifically binds to the half-site 5'-CAC-3', while BMAL1 binds to the half-site 5'-GTGA-3'. The CLOCK-BMAL1 heterodimer also recognizes the non-canonical E-box motifs 5'-AACGTGA-3' and 5'-CATGTGA-3'. Essential for the rhythmic interaction of CLOCK with ASS1 and plays a critical role in positively regulating CLOCK-mediated acetylation of ASS1. Plays a role in protecting against lethal sepsis by limiting the expression of immune checkpoint protein CD274 in macrophages in a PKM2-dependent manner. Regulates the diurnal rhythms of skeletal muscle metabolism via transcriptional activation of genes promoting triglyceride synthesis (DGAT2) and metabolic efficiency (COQ10B). In Mus musculus (Mouse), this protein is Basic helix-loop-helix ARNT-like protein 1 (Bmal1).